A 274-amino-acid chain; its full sequence is HTH-type transcriptional regulator GadX (274 aa).

Positions 145–242 (TRVCTVINNN…GMTPTEYQER (98 aa)) constitute an HTH araC/xylS-type domain. 2 consecutive DNA-binding regions (H-T-H motif) follow at residues 162–183 (ARIA…REEE) and 209–232 (IKRV…RNYY).

Homodimer.

In terms of biological role, positively regulates the expression of about fifteen genes involved in acid resistance such as gadA, gadB and gadC. Depending on the conditions (growth phase and medium), can repress gadW. This chain is HTH-type transcriptional regulator GadX (gadX), found in Escherichia coli (strain K12).